Here is a 141-residue protein sequence, read N- to C-terminus: 3-hydroxyacyl-[acyl-carrier-protein] dehydratase FabZ (141 aa).

The active site involves His48.

Belongs to the thioester dehydratase family. FabZ subfamily.

Its subcellular location is the cytoplasm. The catalysed reaction is a (3R)-hydroxyacyl-[ACP] = a (2E)-enoyl-[ACP] + H2O. Functionally, involved in unsaturated fatty acids biosynthesis. Catalyzes the dehydration of short chain beta-hydroxyacyl-ACPs and long chain saturated and unsaturated beta-hydroxyacyl-ACPs. This is 3-hydroxyacyl-[acyl-carrier-protein] dehydratase FabZ from Streptococcus thermophilus (strain CNRZ 1066).